The chain runs to 625 residues: Dopamine beta-hydroxylase (625 aa).

Topologically, residues 1–9 (MQVPSPSAR) are cytoplasmic. The helical; Signal-anchor for type II membrane protein transmembrane segment at 10-30 (EAASMYGTAVAVFLVLLVAVL) threads the bilayer. The Intragranular portion of the chain corresponds to 31 to 625 (QGLAPPESPL…TVVNIGGGKV (595 aa)). The DOMON domain maps to 50–166 (GDLELSWDVS…GTVHLVYGVL (117 aa)). 6 disulfide bridges follow: Cys147–Cys604, Cys224–Cys275, Cys261–Cys287, Cys382–Cys495, Cys386–Cys573, and Cys458–Cys480. The N-linked (GlcNAc...) asparagine glycan is linked to Asn177. The active site involves Tyr222. Cu(2+)-binding residues include His254 and His255. The N-linked (GlcNAc...) asparagine glycan is linked to Asn315. The Cu(2+) site is built by His325, His404, His406, and Met479. His404 is a catalytic residue. Asn574 is a glycosylation site (N-linked (GlcNAc...) asparagine).

The protein belongs to the copper type II ascorbate-dependent monooxygenase family. In terms of assembly, homotetramer; composed of two disulfide-linked dimers. The cofactor is Cu(2+). In terms of processing, proteolytic cleavage after the membrane-anchor leads to the release of the soluble form. N-glycosylated.

Its subcellular location is the cytoplasmic vesicle. It is found in the secretory vesicle lumen. It localises to the secretory vesicle. The protein localises to the chromaffin granule lumen. The protein resides in the secreted. Its subcellular location is the secretory vesicle membrane. It is found in the chromaffin granule membrane. The catalysed reaction is dopamine + 2 L-ascorbate + O2 = (R)-noradrenaline + 2 monodehydro-L-ascorbate radical + H2O. It participates in catecholamine biosynthesis; (R)-noradrenaline biosynthesis; (R)-noradrenaline from dopamine: step 1/1. Functionally, catalyzes the hydroxylation of dopamine to noradrenaline (also known as norepinephrine), and is thus vital for regulation of these neurotransmitters. This is Dopamine beta-hydroxylase (DBH) from Canis lupus familiaris (Dog).